Consider the following 363-residue polypeptide: Protein RecA (363 aa).

An ATP-binding site is contributed by 79 to 86 (GPESSGKT).

Belongs to the RecA family.

Its subcellular location is the cytoplasm. Can catalyze the hydrolysis of ATP in the presence of single-stranded DNA, the ATP-dependent uptake of single-stranded DNA by duplex DNA, and the ATP-dependent hybridization of homologous single-stranded DNAs. It interacts with LexA causing its activation and leading to its autocatalytic cleavage. The chain is Protein RecA from Borrelia duttonii (strain Ly).